A 363-amino-acid polypeptide reads, in one-letter code: Phospho-N-acetylmuramoyl-pentapeptide-transferase (363 aa).

A run of 11 helical transmembrane segments spans residues Asn4 to Val24, Ile28 to Phe48, Thr72 to Ala92, Asn96 to Asp116, Ile129 to Val149, Leu169 to Ser189, Gly200 to Ala220, Glu241 to Ile261, Ile266 to Ile286, Gly294 to Ile314, and Ile342 to Ile362.

It belongs to the glycosyltransferase 4 family. MraY subfamily. Mg(2+) serves as cofactor.

The protein resides in the cell inner membrane. The catalysed reaction is UDP-N-acetyl-alpha-D-muramoyl-L-alanyl-gamma-D-glutamyl-meso-2,6-diaminopimeloyl-D-alanyl-D-alanine + di-trans,octa-cis-undecaprenyl phosphate = di-trans,octa-cis-undecaprenyl diphospho-N-acetyl-alpha-D-muramoyl-L-alanyl-D-glutamyl-meso-2,6-diaminopimeloyl-D-alanyl-D-alanine + UMP. Its pathway is cell wall biogenesis; peptidoglycan biosynthesis. In terms of biological role, catalyzes the initial step of the lipid cycle reactions in the biosynthesis of the cell wall peptidoglycan: transfers peptidoglycan precursor phospho-MurNAc-pentapeptide from UDP-MurNAc-pentapeptide onto the lipid carrier undecaprenyl phosphate, yielding undecaprenyl-pyrophosphoryl-MurNAc-pentapeptide, known as lipid I. The chain is Phospho-N-acetylmuramoyl-pentapeptide-transferase from Orientia tsutsugamushi (strain Ikeda) (Rickettsia tsutsugamushi).